Here is a 272-residue protein sequence, read N- to C-terminus: MICOS complex subunit MIC27 (272 aa).

A mitochondrion-targeting transit peptide spans Met1–Glu24. Topologically, residues Ser28–Asp107 are mitochondrial intermembrane. A helical transmembrane segment spans residues Phe108–Ala126. Residues Arg127–Lys134 lie on the Mitochondrial matrix side of the membrane. The chain crosses the membrane as a helical span at residues Ile135–Ala152. Over Gln153–Ser272 the chain is Mitochondrial intermembrane. Residues Ser187 to Ser272 form a disordered region. 2 stretches are compositionally biased toward polar residues: residues Lys188–Gln198 and Ile206–Thr245.

This sequence belongs to the apolipoprotein O/MICOS complex subunit Mic27 family. Component of the mitochondrial contact site and cristae organizing system (MICOS) complex (also known as MINOS or MitOS complex).

It is found in the mitochondrion inner membrane. In terms of biological role, component of the MICOS complex, a large protein complex of the mitochondrial inner membrane that plays crucial roles in the maintenance of crista junctions, inner membrane architecture, and formation of contact sites to the outer membrane. This chain is MICOS complex subunit MIC27 (APOOL), found in Gallus gallus (Chicken).